The sequence spans 497 residues: Vacuolar-processing enzyme beta-isozyme 1 (497 aa).

Positions 1-23 are cleaved as a signal peptide; it reads MAARCWVWGFVVALLAVAAAADG. N-linked (GlcNAc...) asparagine glycosylation is present at N153. The active site involves H180. The active-site Nucleophile is the C222. C255 and C269 are joined by a disulfide. The N-linked (GlcNAc...) asparagine glycan is linked to N340. Cystine bridges form between C432–C462 and C444–C479.

The protein belongs to the peptidase C13 family. In terms of processing, auto-catalytic activation. As to expression, expressed in developing seeds.

It is found in the protein storage vacuole. It carries out the reaction Hydrolysis of proteins and small molecule substrates at -Asn-|-Xaa- bonds.. Its function is as follows. Asparagine-specific endopeptidase that may be involved in processing of proteins targeted to vacuoles. Cysteine protease required for post-translational proteolysis of seed storage proteins in the protein storage vacuole (PSV) of developing seeds, by processing of proglutelin precursor to mature glutelin subunits, thus contributing to the formation of protein crystalline structures in PSV. The protein is Vacuolar-processing enzyme beta-isozyme 1 of Oryza sativa subsp. japonica (Rice).